The following is a 419-amino-acid chain: Tryptophan synthase beta chain (419 aa).

Residue lysine 113 is modified to N6-(pyridoxal phosphate)lysine.

This sequence belongs to the TrpB family. As to quaternary structure, tetramer of two alpha and two beta chains. The cofactor is pyridoxal 5'-phosphate.

It carries out the reaction (1S,2R)-1-C-(indol-3-yl)glycerol 3-phosphate + L-serine = D-glyceraldehyde 3-phosphate + L-tryptophan + H2O. The protein operates within amino-acid biosynthesis; L-tryptophan biosynthesis; L-tryptophan from chorismate: step 5/5. In terms of biological role, the beta subunit is responsible for the synthesis of L-tryptophan from indole and L-serine. The polypeptide is Tryptophan synthase beta chain (Picrophilus torridus (strain ATCC 700027 / DSM 9790 / JCM 10055 / NBRC 100828 / KAW 2/3)).